The primary structure comprises 338 residues: Phenylalanine--tRNA ligase alpha subunit (338 aa).

Mg(2+) is bound at residue E252.

Belongs to the class-II aminoacyl-tRNA synthetase family. Phe-tRNA synthetase alpha subunit type 1 subfamily. In terms of assembly, tetramer of two alpha and two beta subunits. Mg(2+) is required as a cofactor.

It is found in the cytoplasm. It catalyses the reaction tRNA(Phe) + L-phenylalanine + ATP = L-phenylalanyl-tRNA(Phe) + AMP + diphosphate + H(+). This is Phenylalanine--tRNA ligase alpha subunit from Pseudomonas aeruginosa (strain UCBPP-PA14).